The chain runs to 196 residues: Carnitine operon protein CaiE (196 aa).

Residues 173–196 (TQPLRQMEENRPRLQGTTDVTPKR) form a disordered region. Over residues 187-196 (QGTTDVTPKR) the composition is skewed to polar residues.

Belongs to the transferase hexapeptide repeat family.

Its pathway is amine and polyamine metabolism; carnitine metabolism. Functionally, overproduction of CaiE stimulates the activity of CaiB and CaiD. The polypeptide is Carnitine operon protein CaiE (Escherichia coli O157:H7).